A 1805-amino-acid polypeptide reads, in one-letter code: Cytadherence high molecular weight protein 2 (1805 aa).

Coiled coils occupy residues 28-838, 914-1591, 1632-1723, and 1777-1804; these read EKNR…NNAF, ELKI…LRTQ, DNTL…QHNT, and NITK…KAAS.

Functionally, component of the cytoskeleton-like structure which stabilizes the shape of the wall-less Mycoplasma. This cytoskeleton-like network of accessory proteins containing HMW proteins 1 to 5 allows the proper anchoring of cytadhesin proteins in the mycoplasmal membrane at the attachment organelle. The sequence is that of Cytadherence high molecular weight protein 2 (hmw2) from Mycoplasma genitalium (strain ATCC 33530 / DSM 19775 / NCTC 10195 / G37) (Mycoplasmoides genitalium).